Consider the following 59-residue polypeptide: Large ribosomal subunit protein uL30 (59 aa).

Belongs to the universal ribosomal protein uL30 family. As to quaternary structure, part of the 50S ribosomal subunit.

The chain is Large ribosomal subunit protein uL30 from Alteromonas mediterranea (strain DSM 17117 / CIP 110805 / LMG 28347 / Deep ecotype).